Here is a 233-residue protein sequence, read N- to C-terminus: Cilia- and flagella-associated protein 299 (233 aa).

It localises to the cytoplasm. It is found in the nucleus. Its function is as follows. May be involved in spermatogenesis. This Homo sapiens (Human) protein is Cilia- and flagella-associated protein 299.